Here is an 89-residue protein sequence, read N- to C-terminus: Small ribosomal subunit protein uS15 (89 aa).

It belongs to the universal ribosomal protein uS15 family. In terms of assembly, part of the 30S ribosomal subunit. Forms a bridge to the 50S subunit in the 70S ribosome, contacting the 23S rRNA.

Functionally, one of the primary rRNA binding proteins, it binds directly to 16S rRNA where it helps nucleate assembly of the platform of the 30S subunit by binding and bridging several RNA helices of the 16S rRNA. Its function is as follows. Forms an intersubunit bridge (bridge B4) with the 23S rRNA of the 50S subunit in the ribosome. This Pseudomonas putida (strain GB-1) protein is Small ribosomal subunit protein uS15.